The primary structure comprises 334 residues: Probable tRNA pseudouridine synthase B (334 aa).

Asp-82 functions as the Nucleophile in the catalytic mechanism. The region spanning Leu-250 to Met-325 is the PUA domain.

The protein belongs to the pseudouridine synthase TruB family. Type 2 subfamily.

It carries out the reaction uridine(55) in tRNA = pseudouridine(55) in tRNA. In terms of biological role, could be responsible for synthesis of pseudouridine from uracil-55 in the psi GC loop of transfer RNAs. The sequence is that of Probable tRNA pseudouridine synthase B from Thermococcus onnurineus (strain NA1).